We begin with the raw amino-acid sequence, 799 residues long: MEIPKLLPARGTLQGGGGGGIPAGGGRVHRGPDSPAGQVPTRRLLLPRGPQDGGPGRRREEASTASRGPGPSLFAPRPHQPSGGGDDFFLVLLDPVGGDVETAGSGQAAGPVLREEAKAGPGLQGDESGANPAGCSAQGPHCLSAVPTPAPISAPGPAAAFAGTVTIHNQDLLLRFENGVLTLATPPPHAWEPGAAPAQQPRCLIAPQAGFPQAAHPGDCPELRSDLLLAEPAEPAPAPAPQEEAEGLAAALGPRGLLGSGPGVVLYLCPEALCGQTFAKKHQLKMHLLTHSSSQGQRPFKCPLGGCGWTFTTSYKLKRHLQSHDKLRPFGCPAEGCGKSFTTVYNLKAHMKGHEQENSFKCEVCEESFPTQAKLGAHQRSHFEPERPYQCAFSGCKKTFITVSALFSHNRAHFREQELFSCSFPGCSKQYDKACRLKIHLRSHTGERPFLCDFDGCGWNFTSMSKLLRHKRKHDDDRRFMCPVEGCGKSFTRAEHLKGHSITHLGTKPFVCPVAGCCARFSARSSLYIHSKKHLQDVDTWKSRCPISSCNKLFTSKHSMKTHMVKRHKVGQDLLAQLEAANSLTPSSELTSQRQNDLSDAEIVSLFSDVPDSTSAALLDTALVNSGILTIDVASVSSTLAGHLPANNNNSVGQAVDPPSLMATSDPPQSLDTSLFFGTAATGFQQSSLNMDEVSSVSVGPLGSLDSLAMKNSSPEPQALTPSSKLTVDTDTLTPSSTLCENSVSELLTPAKAEWSVHPNSDFFGQEGETQFGFPNAAGNHGSQKERNLITVTGSSFLV.

Positions 1–89 (MEIPKLLPAR…QPSGGGDDFF (89 aa)) are disordered. Residues 13-26 (LQGGGGGGIPAGGG) show a composition bias toward gly residues. 10 consecutive C2H2-type zinc fingers follow at residues 267-291 (YLCPEALCGQTFAKKHQLKMHLLTH), 300-324 (FKCPLGGCGWTFTTSYKLKRHLQSH), 330-354 (FGCPAEGCGKSFTTVYNLKAHMKGH), 360-382 (FKCEVCEESFPTQAKLGAHQRSH), 389-413 (YQCAFSGCKKTFITVSALFSHNRAH), 420-444 (FSCSFPGCSKQYDKACRLKIHLRSH), 450-474 (FLCDFDGCGWNFTSMSKLLRHKRKH), 480-504 (FMCPVEGCGKSFTRAEHLKGHSITH), 510-534 (FVCPVAGCCARFSARSSLYIHSKKH), and 543-568 (SRCPISSCNKLFTSKHSMKTHMVKRH). The tract at residues 267 to 573 (YLCPEALCGQ…MVKRHKVGQD (307 aa)) is required for interaction with ZXDC. The segment at 572–699 (QDLLAQLEAA…NMDEVSSVSV (128 aa)) is required for transcriptional activation.

This sequence belongs to the ZXD family. In terms of assembly, self-associates. Interacts with ZXDC and CIITA. In terms of tissue distribution, may be expressed in brain, heart, kidney, liver, lung, muscle and placenta.

The protein localises to the nucleus. Cooperates with CIITA to promote transcription of MHC class I and MHC class II genes. The protein is Zinc finger X-linked protein ZXDA (ZXDA) of Homo sapiens (Human).